Reading from the N-terminus, the 891-residue chain is MLTGRESLLRLIGKRRRFLPNRHLLLSAHTPNSLNLEFNDYGNLVSLAGDDCRLSEDPTSSDDPSKFSDDLSLSTRKKRRLTQTTLLQSSFLSVPKQLEDGLVICTQQKSILDSETFEFSLVQRSEPSESICCKVEDGSCSPSREESLKTVTLDEDNGEAIETFIVGRKFSDVQDLEIGGDIFLLRHPENVKDRNAIKVISGDSEMLGYLPKDISQCLSPLIDDYDLKFEGTITSVPKKSSEAVLIKVVCHKMRSDGWKECELYGDFKPLWEKVLQVVEHQMQFPPKTTRYQLNFNVLLQEVLRSCSHLFTADEKAFLESFPTLSEDSQRLFIRLYTRKGPWFRLSNISYPEVTDSLQALKDLTVRGFMSSVKDANELDNQKMKEITELLNVTELRDILSMNKVFSRTSRKRDLINSLCSCYNDGTRINLATVILERTGLCAKVSSTAESLIWRVERLFFLNGEQDLSSFVLLDLGIIKYPTYKCIDSEQIFSNRTKLLAYEEAIEVAQLMDESLDNEDPQTVLKCIIIAETRISSSSLDSAHAAAFNRFTAPWVNSKVVLLGVSFFENQKRYNRAVYLLRRLLSCFNCDGRRGYWTVRLSTDLEHMGRPNESLTVAEQGLLDPWVRAGSRVALQRRILRLAKPPRRWKTPTFSNLVDNKIPEVTIQGRSLNCEVGIKNRFYGEDGEQCGVEQLALQYYSGEGGGWQGIHTESSIWLTIFGLLMWDILFSDVPGVFQTRFQTAPLDLETESFYLTRKETIESQLEKVANGMAEEILIISYETQRGTACRGVAWERFSLEELRAAVACVGGMCIASLCRHLAQDYRSWCSGMPDLLVWRFKENGYEGEAKLVEVKSEKDRLSEQQRAWLLLLMDSGFNVEICKVRPASLIKT.

Mn(2+)-binding residues include Glu712, Asp833, Glu852, and Val853. The VRR-NUC domain maps to 770–884 (GMAEEILIIS…GFNVEICKVR (115 aa)).

The protein belongs to the FAN1 family. Requires Mn(2+) as cofactor. Mg(2+) is required as a cofactor.

It localises to the nucleus. The catalysed reaction is Hydrolytically removes 5'-nucleotides successively from the 3'-hydroxy termini of 3'-hydroxy-terminated oligonucleotides.. Nuclease required for the repair of DNA interstrand cross-links (ICLs). Acts as a 5'-3' exonuclease that anchors at a cut end of DNA and cleaves DNA successively at every third nucleotide, allowing to excise an ICL from one strand through flanking incisions. May act upstream of the helicase RECQL4A and the ATPase RAD5A, which is involved in error-free post-replicative repair. Functions independently of MUS81 pathway, but in a similar pathway with RECQ4A, RAD5A and MFH1 in ICL repair. The protein is Fanconi-associated nuclease 1 homolog of Arabidopsis thaliana (Mouse-ear cress).